A 321-amino-acid polypeptide reads, in one-letter code: Probable arabinan endo-1,5-alpha-L-arabinosidase A (321 aa).

An N-terminal signal peptide occupies residues 1 to 19 (MYRLLSVASVPLLASLVHG). Asp34 (proton acceptor) is an active-site residue. Glu200 acts as the Proton donor in catalysis. A glycan (N-linked (GlcNAc...) asparagine) is linked at Asn295.

Belongs to the glycosyl hydrolase 43 family.

The protein resides in the secreted. The catalysed reaction is Endohydrolysis of (1-&gt;5)-alpha-arabinofuranosidic linkages in (1-&gt;5)-arabinans.. It participates in glycan metabolism; L-arabinan degradation. Its function is as follows. Endo-1,5-alpha-L-arabinanase involved in degradation of pectin. Its preferred substrate is linear 1,5-alpha-L-arabinan. This chain is Probable arabinan endo-1,5-alpha-L-arabinosidase A (abnA), found in Aspergillus niger (strain ATCC MYA-4892 / CBS 513.88 / FGSC A1513).